The primary structure comprises 185 residues: Peptide deformylase (185 aa).

Residues C94 and H136 each coordinate Fe cation. E137 is an active-site residue. H140 contributes to the Fe cation binding site.

The protein belongs to the polypeptide deformylase family. Fe(2+) is required as a cofactor.

It catalyses the reaction N-terminal N-formyl-L-methionyl-[peptide] + H2O = N-terminal L-methionyl-[peptide] + formate. Its function is as follows. Removes the formyl group from the N-terminal Met of newly synthesized proteins. Requires at least a dipeptide for an efficient rate of reaction. N-terminal L-methionine is a prerequisite for activity but the enzyme has broad specificity at other positions. This Chlorobium phaeobacteroides (strain BS1) protein is Peptide deformylase.